A 277-amino-acid chain; its full sequence is Glycerol-3-phosphate acyltransferase (277 aa).

The next 5 helical transmembrane spans lie at 3–23 (LFIF…AIIV), 55–75 (IMVM…AKLL), 79–99 (PVTV…PVFF), 111–131 (IGAL…TWLL), and 155–175 (LILV…ILVL). A disordered region spans residues 207-277 (SPATSAEQEF…PKTKTVKEKE (71 aa)). The segment covering 216–239 (FPGKEVIDTNIDETEKTEQAEAVK) has biased composition (basic and acidic residues). 2 stretches are compositionally biased toward basic residues: residues 240–253 (KPKA…AKKT) and 262–271 (KPRSTKPKTK).

This sequence belongs to the PlsY family. Probably interacts with PlsX.

Its subcellular location is the cell inner membrane. The enzyme catalyses an acyl phosphate + sn-glycerol 3-phosphate = a 1-acyl-sn-glycero-3-phosphate + phosphate. The protein operates within lipid metabolism; phospholipid metabolism. Functionally, catalyzes the transfer of an acyl group from acyl-phosphate (acyl-PO(4)) to glycerol-3-phosphate (G3P) to form lysophosphatidic acid (LPA). This enzyme utilizes acyl-phosphate as fatty acyl donor, but not acyl-CoA or acyl-ACP. This is Glycerol-3-phosphate acyltransferase from Legionella pneumophila (strain Paris).